The sequence spans 295 residues: SPX domain-containing protein 1 (295 aa).

One can recognise an SPX domain in the interval 1 to 166 (MKFGKSLSSQ…GALIRLPFIQ (166 aa)). Residues 197-227 (NELPVSSEDGRGDSTNEDKPSNPSSSLVNGG) form a disordered region. Over residues 204-216 (EDGRGDSTNEDKP) the composition is skewed to basic and acidic residues.

As to quaternary structure, interacts (via SPX domain) with PHR2 (via C-terminus). Interacts with RLI1 in the nucleus to prevents its positive regulation of leaf inclination during phosphate (Pi) starvation.

The protein resides in the nucleus. Involved in plant adaptation to phosphate (Pi) starvation. Inhibits PHR2 DNA-binding activity via a Pi-dependent protein interaction. Suppresses the regulation on expression of PT2 by PHR2 and accumulation of shoot Pi. Optimizes growth under phosphate-limited conditions through a negative feedback loop of the PSI (phosphate starvation-induced) signaling pathway. Regulates the expression of SPX2, SPX3 and SPX5. May be an important link between signal transduction pathways related to phosphate starvation and cold stress. Together with SPX2, plays a negative role in the regulation of leaf inclination by preventing RLI1 transcription factor activity in Pi depleted conditions. The chain is SPX domain-containing protein 1 from Oryza sativa subsp. indica (Rice).